A 579-amino-acid polypeptide reads, in one-letter code: uncharacterized protein (579 aa).

Residues 1 to 100 (MSGRRRNHPG…APPCGPYPGE (100 aa)) are disordered. Positions 80 to 90 (GQQQSEPQHNS) are enriched in polar residues. The next 11 membrane-spanning stretches (helical) occupy residues 148–168 (FAVD…AAAS), 175–195 (VALY…LIGP), 206–226 (VALA…IMNY), 228–248 (GATG…MMVL), 279–299 (VFGL…VEFV), 303–323 (LFKL…GALL), 378–398 (LWGN…PAFV), 407–427 (WVQL…NFAG), 448–468 (IAVT…MTTI), 504–524 (SEST…MVYT), and 526–546 (LWVG…QTVV).

The protein to M.tuberculosis Rv0876c.

The protein resides in the cell membrane. This is an uncharacterized protein from Mycobacterium leprae (strain TN).